We begin with the raw amino-acid sequence, 387 residues long: Probable purine permease 6 (387 aa).

The tract at residues 1–24 is disordered; it reads MMELESETQELHLHVNGEPEGKFS. The segment covering 9 to 24 has biased composition (basic and acidic residues); sequence QELHLHVNGEPEGKFS. 10 helical membrane-spanning segments follow: residues 36 to 56, 68 to 88, 106 to 126, 129 to 149, 162 to 182, 201 to 221, 238 to 258, 283 to 303, 309 to 329, and 333 to 353; these read LRVSLYVTLLLAGETIATLLG, WLETLVQLVGFPLTLPCYYYL, FLTLSLVYIGLGLLVAGHCIL, FGLLYLPVSTFSLISASQLAF, ITPFILNSLVLLTISSTLLVI, YVIGYICAVGSSAGYSLVLSL, ILDMATYPSMVATCVVVVGLF, INIGSTISWQACLIGSVGLII, FSNVISTLCLPVVPVLAVVFF, and MSGIKLVAMFLAIWGFVSYGY. The disordered stretch occupies residues 362-387; sequence PEEDQELPQSKEEEEQKQVDTIHVQA. Residues 370-381 show a composition bias toward basic and acidic residues; the sequence is QSKEEEEQKQVD.

The protein belongs to the purine permeases (TC 2.A.7.14) family.

Its subcellular location is the membrane. The polypeptide is Probable purine permease 6 (PUP6) (Arabidopsis thaliana (Mouse-ear cress)).